A 104-amino-acid chain; its full sequence is Small ribosomal subunit protein uS10 (104 aa).

This sequence belongs to the universal ribosomal protein uS10 family. Part of the 30S ribosomal subunit.

Functionally, involved in the binding of tRNA to the ribosomes. This Gloeobacter violaceus (strain ATCC 29082 / PCC 7421) protein is Small ribosomal subunit protein uS10.